The primary structure comprises 96 residues: Envelope glycoprotein N (96 aa).

The signal sequence occupies residues 1–21; that stretch reads MPRSPLIVAVVAAALFAIVRG. Residues 22–54 are Virion surface-facing; that stretch reads RDPLLDAMRREGAMDFWSAGCYARGVPLSEPPQ. A helical membrane pass occupies residues 55 to 75; it reads ALVVFYVALTAVMVAVALYAY. Over 76-96 the chain is Intravirion; it reads GLCFRLMGASGPNKKESRGRG.

Belongs to the herpesviridae glycoprotein N family. As to quaternary structure, interacts (via N-terminus) with gM (via N-terminus). The gM-gN heterodimer forms the gCII complex.

Its subcellular location is the virion membrane. It is found in the host membrane. The protein localises to the host Golgi apparatus. It localises to the host trans-Golgi network. Functionally, envelope glycoprotein necessary for proper maturation of gM and modulation of its membrane fusion activity. Also plays a critical role in virion morphogenesis. The protein is Envelope glycoprotein N of Bos taurus (Bovine).